A 400-amino-acid polypeptide reads, in one-letter code: Trans-enoyl reductase ucsL (400 aa).

50 to 53 (TDHK) contacts NADP(+). 145-152 (SVHGSVAL) contributes to the substrate binding site. NADP(+) contacts are provided by residues 204–207 (STAC), 227–230 (SPRN), Tyr-245, and 292–293 (LE). Position 313 to 317 (313 to 317 (GPVMF)) interacts with substrate. 389 to 390 (VS) contributes to the NADP(+) binding site.

The protein belongs to the zinc-containing alcohol dehydrogenase family. In terms of assembly, monomer.

The protein operates within mycotoxin biosynthesis. Trans-enoyl reductase; part of the gene cluster that mediates the biosynthesis of UCS1025A, a member of the pyrrolizidinone family that acts as a strong telomerase inhibitor and displays potent antibacterial and antitumor properties. These compounds share a hemiaminal-containing pyrrolizidinone core fused with a gamma-lactone, giving a furopyrrolizidine that is connected to a decalin fragment. The polyketide synthase module (PKS) of the PKS-NRPS ucsA is responsible for the synthesis of the polyketide backbone via the condensation of an acetyl-CoA starter unit with 6 malonyl-CoA units. The downstream nonribosomal peptide synthetase (NRPS) module then amidates the carboxyl end of the polyketide with a 2S,3S-methylproline derived from L-isoleucine by the 2-oxoglutarate-dependent dioxygenase ucsF which converts L-isoleucine to (4S,5S)-4-methylpyrroline-5-carboxylate that is further converted to 2S,3S-methylproline by the pyrroline-5-carboxylate reductase ucsG. Reductive release of the completed aminoacyl polyketide from the assembly line can form the 3-pyrrolin-2-one structure via an intramolecular Knoevenagel reaction. Because ucsA lacks a designated enoylreductase (ER) domain, the required activity is provided the enoyl reductase ucsL. This keto acyclic precursor is the substrate of the Diels-Alderase ucsH, that catalyzes the Diels-Alder cycloaddition. Oxidation of the 3S-methyl group to a carboxylate by the cytochrome P450 monooxygenase ucsK allows an oxa-Michael cyclization that might involve the reductase/dehydrogenase ucsI and which furnishes the furopyrrolizidine. The oxidase ucsJ likely plays a critical role in stereoselective reduction of the C5-C6 double bond to afford the required R-configured carboxylate group. Further enolization and oxidation at C5 by an unidentified enzyme affords the last intermediate that can undergo oxa-Michael cyclization to yield UCS1025A. In Acremonium sp, this protein is Trans-enoyl reductase ucsL.